The following is a 365-amino-acid chain: Protein AC54 (365 aa).

In terms of assembly, interacts with C42 and VP80. Interacts with protein 38K.

It localises to the virion. Its function is as follows. Structural protein that participates in nucleocapsid assembly. Plays an essential role in the proper localization of the major capsid protein VP39, and the minor capsid protein 38K into the capsid assembly site. This Lepidoptera (butterflies and moths) protein is Protein AC54 (AC54).